The chain runs to 99 residues: DNA-binding protein HU (99 aa).

This sequence belongs to the bacterial histone-like protein family. In terms of assembly, homodimer.

Its function is as follows. Histone-like DNA-binding protein which is capable of wrapping DNA to stabilize it, and thus to prevent its denaturation under extreme environmental conditions. This is DNA-binding protein HU (hup) from Rickettsia typhi (strain ATCC VR-144 / Wilmington).